The sequence spans 108 residues: UPF0145 protein sll118 (108 aa).

Belongs to the UPF0145 family.

The chain is UPF0145 protein sll118 from Synechocystis sp. (strain ATCC 27184 / PCC 6803 / Kazusa).